A 177-amino-acid polypeptide reads, in one-letter code: Interleukin-1 receptor antagonist protein (177 aa).

The first 25 residues, methionine 1 to cysteine 25, serve as a signal peptide directing secretion. Residues cysteine 91 and cysteine 141 are joined by a disulfide bond. Asparagine 109 carries N-linked (GlcNAc...) asparagine glycosylation.

Belongs to the IL-1 family. The intracellular form of IL1RN is predominantly expressed in epithelial cells.

The protein resides in the secreted. It is found in the cytoplasm. Anti-inflammatory antagonist of interleukin-1 family of proinflammatory cytokines such as interleukin-1beta/IL1B and interleukin-1alpha/IL1A. Protects from immune dysregulation and uncontrolled systemic inflammation triggered by IL1 for a range of innate stimulatory agents such as pathogens. The sequence is that of Interleukin-1 receptor antagonist protein (IL1RN) from Homo sapiens (Human).